Consider the following 276-residue polypeptide: MSKGPGLFTDIGKKAKDLLTRDYNSDQKFSISTYSASGVALTSTALKKGGVHAADVATQYKYKNALFDVKIDTDSSVLTTVTLTEILPSTKAIASFKVPDYNSAKLEVQYFHDHATVTAAAALKQNPLIDITATLGSPVISFGAEAGYDTTSKTFTKYNAGISVTKPDACLSIILGDKGDSLKASYLHHFDEFKRTAAVGEVYRKFSTNENTITVGGLYAIDHSTAVKAKLNNHGTLGALLQHEVLPRSLVTVSSEIDTKALEKHPRFGLSLALKP.

At Ser-76 the chain carries Phosphoserine. A Phosphothreonine modification is found at Thr-236.

This sequence belongs to the eukaryotic mitochondrial porin (TC 1.B.8.1) family. As to expression, expressed in root tips, steles, leaves, sepals, petals, stamen and pistils.

The protein resides in the mitochondrion outer membrane. Its function is as follows. Forms a channel through the mitochondrial outer membrane that allows diffusion of small hydrophilic molecules. The channel adopts an open conformation at low or zero membrane potential and a closed conformation at potentials above 30-40 mV. The open state has a weak anion selectivity whereas the closed state is cation-selective. Involved in plant growth and development at the vegetative and reproductive stages. Is important for leaf and pollen development and mitochondrial membrane potential steady state. May be involved in ABA-mediated early seedling development and disease resistance. The protein is Mitochondrial outer membrane protein porin 2 (VDAC2) of Arabidopsis thaliana (Mouse-ear cress).